A 774-amino-acid chain; its full sequence is E3 ubiquitin-protein ligase RFWD3 (774 aa).

Disordered stretches follow at residues 32 to 126 (GTIE…TAGA) and 203 to 281 (PYPL…SAME). 2 positions are modified to phosphoserine; by ATM and ATR: serine 59 and serine 75. Positions 92-103 (LTEEVQPSEENM) are enriched in acidic residues. Over residues 108 to 121 (PGTSEEPSQGSGAN) the composition is skewed to polar residues. The span at 223–242 (SDSDGSAEDEEVVVQAEEPE) shows a compositional bias: acidic residues. Residues 288 to 332 (CTICLEQWTNAGDHRISALRCGHLFGFRCISKWLKGQTRKCPQCN) form an RING-type; degenerate zinc finger. The stretch at 358 to 403 (RMKSDLLNEQMLRKQAELESAQCRLQLQVLIDKCTKLNSRVQDLEK) forms a coiled coil. WD repeat units lie at residues 493–535 (IPMH…VVQT), 536–568 (YNTGRPVWSCCWCLDENNYVYAGLASGSILIYD), and 583–628 (KARC…SHKP).

As to quaternary structure, interacts with MDM2 and p53/TP53. Binds to the RPA complex via direct interaction with RPA2. Interacts with RAD51. Post-translationally, phosphorylated at Ser-59 and Ser-75 upon DNA damage by ATM or ATR. ATM phosphorylation occurs at early times upon DNA damage, while ATR is the major kinase at later times. Phosphorylation by ATM and ATR is required to stabilize p53/TP53. Part of the phosphorylation depends upon RPA2 presence.

It is found in the nucleus. It localises to the PML body. Its subcellular location is the cytoplasm. It carries out the reaction S-ubiquitinyl-[E2 ubiquitin-conjugating enzyme]-L-cysteine + [acceptor protein]-L-lysine = [E2 ubiquitin-conjugating enzyme]-L-cysteine + N(6)-ubiquitinyl-[acceptor protein]-L-lysine.. The protein operates within protein modification; protein ubiquitination. E3 ubiquitin-protein ligase required for the repair of DNA interstrand cross-links (ICL) in response to DNA damage. Plays a key role in RPA-mediated DNA damage signaling and repair. Acts by mediating ubiquitination of the RPA complex (RPA1, RPA2 and RPA3 subunits) and RAD51 at stalled replication forks, leading to remove them from DNA damage sites and promote homologous recombination. Also mediates the ubiquitination of p53/TP53 in the late response to DNA damage, and acts as a positive regulator of p53/TP53 stability, thereby regulating the G1/S DNA damage checkpoint. May act by catalyzing the formation of short polyubiquitin chains on p53/TP53 that are not targeted to the proteasome. In response to ionizing radiation, interacts with MDM2 and enhances p53/TP53 ubiquitination, possibly by restricting MDM2 from extending polyubiquitin chains on ubiquitinated p53/TP53. Required to translesion DNA synthesis across DNA-protein cross-link adducts by catalyzing ubiquitination of proteins on single-stranded DNA (ssDNA). The protein is E3 ubiquitin-protein ligase RFWD3 (Rfwd3) of Mus musculus (Mouse).